The chain runs to 161 residues: PHD finger-containing protein 4 (161 aa).

The segment at 30–80 adopts a PHD-type zinc-finger fold; sequence KKPCEVCGSNANDHAIMTCFLCRDTREHIYCARVHLRSVPRMWICEECRMN. 8 residues coordinate Zn(2+): cysteine 33, cysteine 36, cysteine 48, cysteine 51, histidine 57, cysteine 60, cysteine 74, and cysteine 77. A compositionally biased stretch (polar residues) spans 114-132; sequence TMTSSDSGNQISATHQQPP. The interval 114–161 is disordered; the sequence is TMTSSDSGNQISATHQQPPQAHASPVAVPMDTSSSDNQQPPSDSESAI. Positions 146–161 are enriched in low complexity; that stretch reads SSSDNQQPPSDSESAI.

As to quaternary structure, interacts directly with AIPP3/BDT1.

Together with AIPP3/BDT1, cooperates to form a BAH-PHD bivalent histone reader complex able to read histone H3 lysine 27 trimethylation (H3K27me3) histone marks in order to regulate transcription, especially to prevent early flowering; promotes AIPP3/BDT1 binding to H3K27me3. The protein is PHD finger-containing protein 4 of Arabidopsis thaliana (Mouse-ear cress).